Here is a 1764-residue protein sequence, read N- to C-terminus: Cilia- and flagella-associated protein 44 (1764 aa).

WD repeat units follow at residues G115–R157, A160–K199, G208–T248, C255–P294, H361–E400, A454–T493, and V495–L534. Positions Q570 to L654 are disordered. Basic residues predominate over residues K575 to G584. 2 stretches are compositionally biased toward basic and acidic residues: residues K585–G596 and G604–A628. Residues E629–D641 show a composition bias toward acidic residues. WD repeat units follow at residues S649–A692, A707–M752, and Q753–P791. A coiled-coil region spans residues Y821 to L850. Disordered stretches follow at residues A972–A1003 and K1426–G1468. Residues G1434–E1462 show a composition bias toward acidic residues. 3 coiled-coil regions span residues D1479–Q1517, L1567–I1674, and E1729–K1758.

This sequence belongs to the CFAP44 family.

The protein resides in the cell projection. Its subcellular location is the cilium. It localises to the flagellum. It is found in the cytoplasm. The protein localises to the cytoskeleton. The protein resides in the flagellum axoneme. In terms of biological role, flagellar protein involved in sperm flagellum axoneme organization and function. The sequence is that of Cilia- and flagella-associated protein 44 from Chlamydomonas reinhardtii (Chlamydomonas smithii).